We begin with the raw amino-acid sequence, 229 residues long: MYDVNEWKHVFKLDPNKDLPDEQLERLCESGTDAIVIGGSDNITEDNVLRLMSKVRRFLVPCVLEVSTIDSIVPGFDLYFIPSVLNSKKADWIVGMHHQAMKEYGELMSMEEIVTEGYCIVNPDCKAAALTEADTHIETEDILAYARVAEHLLHLPIFYLEYSGMLADIEMVEKTKAVLDKSVLFYGGGIKDAETAERFGRHADVIVVGNAVYEDFDQALKTVAAVKTK.

Lys-12 contacts sn-glycerol 1-phosphate. Residues Asp-14 and Ser-40 each contribute to the Mg(2+) site. Residues 159–164 (YLEYSG), Gly-189, and 209–210 (GN) contribute to the sn-glycerol 1-phosphate site.

The protein belongs to the GGGP/HepGP synthase family. Group I subfamily. Homodimer. It depends on Mg(2+) as a cofactor.

The enzyme catalyses sn-glycerol 1-phosphate + all-trans-heptaprenyl diphosphate = 3-heptaprenyl-sn-glycero-1-phosphate + diphosphate. It participates in membrane lipid metabolism; glycerophospholipid metabolism. Prenyltransferase that catalyzes in vivo the transfer of the heptaprenyl moiety of heptaprenyl pyrophosphate (HepPP; 35 carbon atoms) to the C3 hydroxyl of sn-glycerol-1-phosphate (G1P), producing heptaprenylglyceryl phosphate (HepGP). This reaction is an ether-bond-formation step in the biosynthesis of archaea-type G1P-based membrane lipids found in Bacillales. This is Heptaprenylglyceryl phosphate synthase from Bacillus velezensis (strain DSM 23117 / BGSC 10A6 / LMG 26770 / FZB42) (Bacillus amyloliquefaciens subsp. plantarum).